The primary structure comprises 246 residues: Proteasome subunit alpha type-6-B (246 aa).

The protein belongs to the peptidase T1A family. In terms of assembly, component of the 20S core complex of the 26S proteasome. The 26S proteasome is composed of a core protease (CP), known as the 20S proteasome, capped at one or both ends by the 19S regulatory particle (RP/PA700). The 20S proteasome core is composed of 28 subunits that are arranged in four stacked rings, resulting in a barrel-shaped structure. The two end rings are each formed by seven alpha subunits, and the two central rings are each formed by seven beta subunits. The catalytic chamber with the active sites is on the inside of the barrel.

The protein localises to the cytoplasm. It localises to the nucleus. Its function is as follows. The proteasome is a multicatalytic proteinase complex which is characterized by its ability to cleave peptides with Arg, Phe, Tyr, Leu, and Glu adjacent to the leaving group at neutral or slightly basic pH. The proteasome has an ATP-dependent proteolytic activity. The chain is Proteasome subunit alpha type-6-B (PAA2) from Arabidopsis thaliana (Mouse-ear cress).